A 640-amino-acid polypeptide reads, in one-letter code: Large subunit GTPase 1 (640 aa).

The tract at residues 1-26 is disordered; it reads MPPKEAPKKWKAPKGPKPTHRKNKNK. Residues 9-24 show a composition bias toward basic residues; the sequence is KWKAPKGPKPTHRKNK. At S103 the chain carries Phosphoserine. The region spanning 188 to 394 is the CP-type G domain; that stretch reads WKQLWRVVER…LCDCPGLVFP (207 aa). Residues 236–239, 343–350, and 387–390 contribute to the GTP site; these read NKAD, GYPNVGKS, and DCPG. The segment at 607–640 is disordered; the sequence is TPFHKVQNSSAGKRHNKKNKSKNAKSKVFSIENN. Residues 618 to 631 show a composition bias toward basic residues; the sequence is GKRHNKKNKSKNAK.

The protein belongs to the TRAFAC class YlqF/YawG GTPase family. LSG1 subfamily. In terms of assembly, associates with the 60S ribosomal subunit. Interacts with ARB1.

The protein localises to the cytoplasm. Functionally, GTPase required for the nuclear export of the 60S ribosomal subunit. Acts by mediating the release of NMD3 from the 60S ribosomal subunit after export into the cytoplasm. The sequence is that of Large subunit GTPase 1 (LSG1) from Saccharomyces cerevisiae (strain ATCC 204508 / S288c) (Baker's yeast).